The primary structure comprises 345 residues: Fe-S cluster assembly protein DRE2 (345 aa).

The interval 11 to 166 is N-terminal SAM-like domain; the sequence is FSHSSNGVVL…SIGSSSGSSS (156 aa). Residues 147–166 are disordered; that stretch reads SKPATASSSFSIGSSSGSSS. Over residues 153–166 the composition is skewed to low complexity; the sequence is SSSFSIGSSSGSSS. A linker region spans residues 167-210; it reads ALPLRRKLGSGASANAKKSLWATQPASANDLIDEASLLRDADFV. Positions 220, 233, 236, and 238 each coordinate [2Fe-2S] cluster. The segment at 220 to 238 is fe-S binding site A; it reads CDVGAGQGKKKKACKGCTC. Residues Cys-307, Cys-310, Cys-318, and Cys-321 each contribute to the [4Fe-4S] cluster site. Short sequence motifs (cx2C motif) lie at residues 307–310 and 318–321; these read CGSC and CSSC. The tract at residues 307–321 is fe-S binding site B; it reads CGSCFLGDAFRCSSC.

This sequence belongs to the anamorsin family. As to quaternary structure, monomer. Interacts with TAH18. Interacts with MIA40. [2Fe-2S] cluster is required as a cofactor. It depends on [4Fe-4S] cluster as a cofactor.

The protein resides in the cytoplasm. It is found in the mitochondrion intermembrane space. Functionally, component of the cytosolic iron-sulfur (Fe-S) protein assembly (CIA) machinery required for the maturation of extramitochondrial Fe-S proteins. Part of an electron transfer chain functioning in an early step of cytosolic Fe-S biogenesis, facilitating the de novo assembly of a [4Fe-4S] cluster on the scaffold complex CFD1-NBP35. Electrons are transferred to DRE2 from NADPH via the FAD- and FMN-containing protein TAH18. TAH18-DRE2 are also required for the assembly of the diferric tyrosyl radical cofactor of ribonucleotide reductase (RNR), probably by providing electrons for reduction during radical cofactor maturation in the catalytic small subunit RNR2. The polypeptide is Fe-S cluster assembly protein DRE2 (Mycosarcoma maydis (Corn smut fungus)).